A 374-amino-acid chain; its full sequence is Cyclin-dependent kinase 9 (374 aa).

A Protein kinase domain is found at 19 to 318 (YEKLAKIGQG…SDDALNHDFF (300 aa)). ATP-binding positions include 25–33 (IGQGTFGEV) and K48. The Proton acceptor role is filled by D151. The disordered stretch occupies residues 345 to 374 (PRRRGHMPQQPANQNRNPATTSQSEFDRVF). Positions 354–368 (QPANQNRNPATTSQS) are enriched in polar residues.

This sequence belongs to the protein kinase superfamily. CMGC Ser/Thr protein kinase family. CDC2/CDKX subfamily. As to quaternary structure, component of the super elongation complex (SEC). Associates with ccnt1/cyclin-T1, ccnt2/cyclin-T2 or ccnk/cyclin-K to form active P-TEFb.

It is found in the nucleus. It localises to the cytoplasm. The protein resides in the PML body. It catalyses the reaction L-seryl-[protein] + ATP = O-phospho-L-seryl-[protein] + ADP + H(+). The catalysed reaction is L-threonyl-[protein] + ATP = O-phospho-L-threonyl-[protein] + ADP + H(+). The enzyme catalyses [DNA-directed RNA polymerase] + ATP = phospho-[DNA-directed RNA polymerase] + ADP + H(+). Functionally, protein kinase involved in the regulation of transcription. Member of the cyclin-dependent kinase pair (CDK9/cyclin-T) complex, also called positive transcription elongation factor b (P-TEFb), which facilitates the transition from abortive to productive elongation by phosphorylating the CTD (C-terminal domain) of the large subunit of RNA polymerase II (RNAP II) polr2a, supt5h and rdbp. This complex is inactive when in the 7SK snRNP complex form. Regulates cytokine inducible transcription networks by facilitating promoter recognition of target transcription factors. P-TEFb is also involved in cotranscriptional histone modification, mRNA processing and mRNA export. In Danio rerio (Zebrafish), this protein is Cyclin-dependent kinase 9.